Reading from the N-terminus, the 439-residue chain is Adenylosuccinate synthetase (439 aa).

GTP is bound by residues 12–18 and 40–42; these read GDEGKGK and GHT. Asp13 acts as the Proton acceptor in catalysis. 2 residues coordinate Mg(2+): Asp13 and Gly40. IMP-binding positions include 13 to 16, 38 to 41, Thr137, Arg151, Gln232, Thr247, and Arg311; these read DEGK and NAGH. The Proton donor role is filled by His41. 307 to 313 is a substrate binding site; that stretch reads ATTGRPR. Residues Arg313, 339 to 341, and 421 to 423 each bind GTP; these read KLD and SNG.

It belongs to the adenylosuccinate synthetase family. In terms of assembly, homodimer. Mg(2+) serves as cofactor.

It is found in the cytoplasm. It catalyses the reaction IMP + L-aspartate + GTP = N(6)-(1,2-dicarboxyethyl)-AMP + GDP + phosphate + 2 H(+). It functions in the pathway purine metabolism; AMP biosynthesis via de novo pathway; AMP from IMP: step 1/2. Functionally, plays an important role in the de novo pathway of purine nucleotide biosynthesis. Catalyzes the first committed step in the biosynthesis of AMP from IMP. This chain is Adenylosuccinate synthetase, found in Salinibacter ruber (strain DSM 13855 / M31).